The following is a 99-amino-acid chain: UPF0122 protein UUR10_0158 (99 aa).

This sequence belongs to the UPF0122 family.

Might take part in the signal recognition particle (SRP) pathway. This is inferred from the conservation of its genetic proximity to ftsY/ffh. May be a regulatory protein. This is UPF0122 protein UUR10_0158 from Ureaplasma urealyticum serovar 10 (strain ATCC 33699 / Western).